The chain runs to 215 residues: Probable phosphoglycerate mutase GpmB (215 aa).

Residues 8-15 (RHGETQWN), 21-22 (QG), Arg-58, Arg-60, 82-85 (ELNM), 104-105 (RR), and 151-152 (GI) each bind substrate. The active-site Tele-phosphohistidine intermediate is the His-9. Glu-82 (proton donor/acceptor) is an active-site residue.

This sequence belongs to the phosphoglycerate mutase family. GpmB subfamily.

The enzyme catalyses (2R)-2-phosphoglycerate = (2R)-3-phosphoglycerate. The protein operates within carbohydrate degradation; glycolysis; pyruvate from D-glyceraldehyde 3-phosphate: step 3/5. This chain is Probable phosphoglycerate mutase GpmB, found in Escherichia coli O9:H4 (strain HS).